The chain runs to 145 residues: Small ribosomal subunit protein uS19 (145 aa).

At Ala2 the chain carries N-acetylalanine. A Glycyl lysine isopeptide (Lys-Gly) (interchain with G-Cter in SUMO2) cross-link involves residue Lys108.

The protein belongs to the universal ribosomal protein uS19 family. In terms of assembly, component of the small ribosomal subunit.

Its subcellular location is the cytoplasm. Component of the small ribosomal subunit. The ribosome is a large ribonucleoprotein complex responsible for the synthesis of proteins in the cell. The protein is Small ribosomal subunit protein uS19 (RPS15) of Bos taurus (Bovine).